The chain runs to 358 residues: Protein FAM187B (358 aa).

A signal peptide spans 1-17 (MLATLWLVGLSLPMLWA). Topologically, residues 18–322 (QRLISCPYKN…DKADSVLRRL (305 aa)) are extracellular. Asn-127 carries N-linked (GlcNAc...) asparagine glycosylation. Residues 323 to 343 (KLMVLSISVLAVGGLLCKVVF) form a helical membrane-spanning segment. The Cytoplasmic segment spans residues 344–358 (RPVCGKKRSQVLLVK).

This sequence belongs to the FAM187 family.

Its subcellular location is the membrane. The chain is Protein FAM187B (Fam187b) from Mus musculus (Mouse).